The following is a 125-amino-acid chain: Large ribosomal subunit protein bL20 (125 aa).

The protein belongs to the bacterial ribosomal protein bL20 family.

Its function is as follows. Binds directly to 23S ribosomal RNA and is necessary for the in vitro assembly process of the 50S ribosomal subunit. It is not involved in the protein synthesizing functions of that subunit. The chain is Large ribosomal subunit protein bL20 from Rhodospirillum rubrum (strain ATCC 11170 / ATH 1.1.1 / DSM 467 / LMG 4362 / NCIMB 8255 / S1).